Consider the following 224-residue polypeptide: Cytidylate kinase (224 aa).

11–19 (GPASAGKST) serves as a coordination point for ATP.

It belongs to the cytidylate kinase family. Type 1 subfamily.

It is found in the cytoplasm. The enzyme catalyses CMP + ATP = CDP + ADP. The catalysed reaction is dCMP + ATP = dCDP + ADP. In Ligilactobacillus salivarius (strain UCC118) (Lactobacillus salivarius), this protein is Cytidylate kinase.